The following is a 331-amino-acid chain: Very-long-chain 3-oxoacyl-CoA reductase (331 aa).

Residues 15–35 (VQWALAGVGALYISAKVLSYL) form a helical membrane-spanning segment. Positions 60, 115, 123, 142, 209, 213, 242, and 244 each coordinate NADP(+). The active-site Proton donor is the Tyr-209. Lys-213 functions as the Lowers pKa of active site Tyr in the catalytic mechanism.

Belongs to the short-chain dehydrogenases/reductases (SDR) family.

The protein localises to the endoplasmic reticulum membrane. It catalyses the reaction a very-long-chain (3R)-3-hydroxyacyl-CoA + NADP(+) = a very-long-chain 3-oxoacyl-CoA + NADPH + H(+). It participates in lipid metabolism; fatty acid biosynthesis. Functionally, component of the microsomal membrane bound fatty acid elongation system, which produces the 26-carbon very long-chain fatty acids (VLCFA) from palmitate. Catalyzes the reduction of the 3-ketoacyl-CoA intermediate that is formed in each cycle of fatty acid elongation. VLCFAs serve as precursors for ceramide and sphingolipids. This chain is Very-long-chain 3-oxoacyl-CoA reductase, found in Pyricularia oryzae (strain 70-15 / ATCC MYA-4617 / FGSC 8958) (Rice blast fungus).